The primary structure comprises 293 residues: DNA repair protein RecO (293 aa).

Belongs to the RecO family.

In terms of biological role, involved in DNA repair and RecF pathway recombination. In Cyanothece sp. (strain PCC 7425 / ATCC 29141), this protein is DNA repair protein RecO.